Reading from the N-terminus, the 243-residue chain is DNA repair protein RecO (243 aa).

The protein belongs to the RecO family.

Functionally, involved in DNA repair and RecF pathway recombination. The protein is DNA repair protein RecO of Chlamydia trachomatis serovar L2 (strain ATCC VR-902B / DSM 19102 / 434/Bu).